A 195-amino-acid chain; its full sequence is MQHPHPIDQPTYMPDVPFQPLWGQEAPPPPIVPYQELIAGFPCTDLSLWQRSQVTPLVPQRPSTNGRANGSSSSSKKTRRRVASMAQRRAANIRERRRMFNLNEAFDKLRRKVPTFAYEKRLSRIETLRLAITYIGFMAELLSGTPSNSHKSRSDVYGSMNGHHQAPPPAIHPHHLHPAAAYQRDFASPYNHSLS.

Disordered stretches follow at residues 1-24 (MQHP…LWGQ) and 56-82 (PLVP…RRRV). The segment covering 63–75 (STNGRANGSSSSS) has biased composition (low complexity). A bHLH domain is found at 86–138 (AQRRAANIRERRRMFNLNEAFDKLRRKVPTFAYEKRLSRIETLRLAITYIGFM). Positions 145–175 (TPSNSHKSRSDVYGSMNGHHQAPPPAIHPHH) are disordered.

The protein resides in the nucleus. Transcription factor that binds to the E-box and functions as inhibitor of transcription. DNA binding requires dimerization with an E protein. Inhibits transcription activation by ASCL1/MASH1 by sequestering E proteins. The chain is Protein Fer3 (fer3) from Drosophila melanogaster (Fruit fly).